The chain runs to 341 residues: Mitochondrial protein C2orf69 homolog (341 aa).

The transit peptide at 1-35 directs the protein to the mitochondrion; it reads MLQVVQSPHNLVFMGSIRSVVACLSLAAVARKMTA.

Belongs to the C2orf69 family.

It is found in the mitochondrion matrix. Its function is as follows. May play a role in the respiratory chain. In Danio rerio (Zebrafish), this protein is Mitochondrial protein C2orf69 homolog.